The primary structure comprises 237 residues: Large ribosomal subunit protein uL22m (237 aa).

Belongs to the universal ribosomal protein uL22 family.

It is found in the mitochondrion. The polypeptide is Large ribosomal subunit protein uL22m (mrpl22) (Dictyostelium discoideum (Social amoeba)).